We begin with the raw amino-acid sequence, 339 residues long: Putative adenosine/adenine deaminase (339 aa).

Positions 16, 18, and 200 each coordinate Zn(2+). Position 18 (H18) interacts with substrate. The active-site Proton donor is E203. D281 contributes to the Zn(2+) binding site. Residue D282 coordinates substrate.

Belongs to the metallo-dependent hydrolases superfamily. Adenosine and AMP deaminases family. Zn(2+) serves as cofactor.

Its function is as follows. Putative nucleoside deaminase. May catalyze the hydrolytic deamination of adenosine or some similar substrate and play a role in purine metabolism. This Streptomyces virginiae (Streptomyces cinnamonensis) protein is Putative adenosine/adenine deaminase.